A 257-amino-acid chain; its full sequence is MPRFALKIEYDGAPFAGWQRQREQPSVQGAVEAALRGLQPDHAGIAAAGRTDAGVHALGQVAHVDLARDWDPFRLSEALNAHLRPAPVAVLAAARVGEDFHARFSALERSYLFRLLVRRAPATHDAGLVWRVMNPLDVEAMREGAKYLIGKHDFTTFRSTMCQAASPVKTLDEITIEESPRDAGTEFRFHLRARSFLHNQVRSIVGTLERVGAGAWDPADVKTALEARDRAACGPVCAPQGLYLRAVRYPEDPFKPA.

Asp-52 acts as the Nucleophile in catalysis. A substrate-binding site is contributed by Tyr-111.

It belongs to the tRNA pseudouridine synthase TruA family. As to quaternary structure, homodimer.

The enzyme catalyses uridine(38/39/40) in tRNA = pseudouridine(38/39/40) in tRNA. Formation of pseudouridine at positions 38, 39 and 40 in the anticodon stem and loop of transfer RNAs. In Dinoroseobacter shibae (strain DSM 16493 / NCIMB 14021 / DFL 12), this protein is tRNA pseudouridine synthase A.